Reading from the N-terminus, the 365-residue chain is P43 5S RNA-binding protein (365 aa).

C2H2-type zinc fingers lie at residues 15–39 (FRCPAAGCKAVYRKEGKLRDHMAGH), 45–69 (WKCGKKDCGKMFARKRQIQKHMKRH), 75–100 (HSCPTAGCKMTFSTKKSLSRHKLYKH), 106–130 (LKCSVPGCKRSFRKKRALRIHVSEH), 136–160 (SVCDVPGCGWKSTSAAKLAAHHRRH), 163–187 (YRCSYEDCQTVSPTWTALQTHLKKH), 191–213 (LQCAACKKPFKKASALRRHKATH), 220–245 (LPCPRQDCDKIFSTVFNLTHHLRKVH), and 251–275 (HRCPHSNCTRSFAMRESLVRHLVVH).

In terms of assembly, the 42S RNP particle comprises four subunits each of which contains one molecule of 5S RNA, three molecules of tRNA, two molecules of p50 (EF1-alpha) and one molecule of the 5S RNA binding protein 43.

In terms of biological role, p43 is a 5S RNA binding protein which is a major constituent of oocytes and comprises part of a 42S ribonucleoprotein storage particle. In Xenopus borealis (Kenyan clawed frog), this protein is P43 5S RNA-binding protein.